Here is a 109-residue protein sequence, read N- to C-terminus: Tyrosine-protein phosphatase 6 (109 aa).

The region spanning 1–109 (YNINVIVMVC…SEDETTPLCV (109 aa)) is the Tyrosine-protein phosphatase domain. A substrate-binding site is contributed by D76.

This sequence belongs to the protein-tyrosine phosphatase family.

It catalyses the reaction O-phospho-L-tyrosyl-[protein] + H2O = L-tyrosyl-[protein] + phosphate. The sequence is that of Tyrosine-protein phosphatase 6 (STY-6) from Styela plicata (Wrinkled sea squirt).